The sequence spans 100 residues: MSRRCQITGKGVLTGNNVSHANNKSRRRFLPNLQETSLLSDILGSAVRLRLSTNGIRTVEHNGGLDAFLLSTPNRKLPTEAQALKRRILRAKEKKAEATA.

The protein belongs to the bacterial ribosomal protein bL28 family.

The chain is Large ribosomal subunit protein bL28 from Gluconacetobacter diazotrophicus (strain ATCC 49037 / DSM 5601 / CCUG 37298 / CIP 103539 / LMG 7603 / PAl5).